Consider the following 185-residue polypeptide: Ribosome-recycling factor (185 aa).

It belongs to the RRF family.

It localises to the cytoplasm. In terms of biological role, responsible for the release of ribosomes from messenger RNA at the termination of protein biosynthesis. May increase the efficiency of translation by recycling ribosomes from one round of translation to another. This is Ribosome-recycling factor from Coxiella burnetii (strain CbuK_Q154) (Coxiella burnetii (strain Q154)).